Here is a 246-residue protein sequence, read N- to C-terminus: Mediator of RNA polymerase II transcription subunit 6 (246 aa).

2 disordered regions span residues 165–186 (MKKKEEEKKEEDERKLEERSTN) and 207–246 (EALEKLDVKEEENPKPEEAPSASAVGEPKFAEPAARATTK). 2 stretches are compositionally biased toward basic and acidic residues: residues 166 to 184 (KKKEEEKKEEDERKLEERS) and 208 to 224 (ALEKLDVKEEENPKPEE).

This sequence belongs to the Mediator complex subunit 6 family. Component of the Mediator complex. Interacts with let-19/mdt-13. Interacts with RNA polymerase II. Interacts with mdt-28.

The protein resides in the nucleus. Functionally, component of the Mediator complex, a coactivator involved in the regulated transcription of nearly all RNA polymerase II-dependent genes. Mediator functions as a bridge to convey information from gene-specific regulatory proteins to the basal RNA polymerase II transcription machinery. Mediator is recruited to promoters by direct interactions with regulatory proteins and serves as a scaffold for the assembly of a functional preinitiation complex with RNA polymerase II and the general transcription factors. The polypeptide is Mediator of RNA polymerase II transcription subunit 6 (mdt-6) (Caenorhabditis briggsae).